The primary structure comprises 248 residues: Probable transcriptional regulatory protein PSPPH_3775 (248 aa).

Belongs to the TACO1 family.

Its subcellular location is the cytoplasm. The sequence is that of Probable transcriptional regulatory protein PSPPH_3775 from Pseudomonas savastanoi pv. phaseolicola (strain 1448A / Race 6) (Pseudomonas syringae pv. phaseolicola (strain 1448A / Race 6)).